The sequence spans 355 residues: Ion-translocating oxidoreductase complex subunit D (355 aa).

The next 4 membrane-spanning stretches (helical) occupy residues 23–43 (WVALCALPGLLAQTYFFGWGT), 44–64 (LVQLILAITIALSLEALVMLF), 78–109 (ALVTAWLLAVAIPPMAPWWIITIGLLFAIVIA), and 129–149 (VVLLISFPVQMTSWSAPLPLI). T194 bears the FMN phosphoryl threonine mark. Helical transmembrane passes span 221–241 (FAGVGWQWVNLAYLAGGLILL), 250–270 (IPVGFLGALLVMSSFFSLFFP), 273–293 (TASPLFHLLSGATMLGAFFIA), 307–327 (ILFGAIIGTLVFIIRSWGGFP), and 328–348 (DGVAFAVLLANMCVPLIDYYT).

The protein belongs to the NqrB/RnfD family. The complex is composed of six subunits: RnfA, RnfB, RnfC, RnfD, RnfE and RnfG. Requires FMN as cofactor.

The protein localises to the cell inner membrane. Functionally, part of a membrane-bound complex that couples electron transfer with translocation of ions across the membrane. This chain is Ion-translocating oxidoreductase complex subunit D, found in Vibrio vulnificus (strain CMCP6).